The chain runs to 546 residues: ASTQSPSVFPLTRCCKNIPSNATSVTLGCLATGYFPEPVMVTWDTGSLNGTTMTLPATTLTLSGHYATISLLTVSGAWAKQMFTCRVAHTPSSTDWVDNKTFSVCSRDFTPPTVKILQSSCDGGGHFPPTIQLLCLVSGYTPGTINITWLEDGQVMDVDLSTASTTQEGELASTQSELTLSQKHWLSDRTYTCQVTYQGHTFEDSTKKCADSNPRGVSAYLSRPSPFDLFIRKSPTITCLVVDLAPSKGTVNLTWSRASGKPVNHSTRKEEKQRNGTLTVTSTLPVGTRDWIEGETYQCRVTHPHLPRALMRSTTKTSGPRAAPEVYAFATPEWPGSRDKRTLACLIQNFMPEDISVQWLHNEVQLPDARHSTTQPRKTKGSGFFVFSRLEVTRAEWEQKDEFICRAVHEAASPSQTVQRAVSVNPGLAGGSAQSQRAPDRVLCHSGQQQGLPRAAGGSVPHPRCHCGAGRADWPGPPELDVCVEEAEGEAPWTWTGLCIFAALFLLSVSYSAAITLLMVQRFLSATRQGRPQTSLDYTNVLQPHA.

Over 1–499 the chain is Extracellular; that stretch reads ASTQSPSVFP…EAPWTWTGLC (499 aa). Ig-like domains are found at residues 6–103, 112–210, 214–318, and 324–423; these read PSVF…KTFS, PTVK…KKCA, PRGV…TKTS, and PEVY…RAVS. Cystine bridges form between C15-C105, C29-C85, C135-C193, C239-C299, and C345-C405. N-linked (GlcNAc...) asparagine glycosylation is found at N21, N49, N99, N146, N252, N264, and N275. A helical membrane pass occupies residues 500–520; that stretch reads IFAALFLLSVSYSAAITLLMV. The Cytoplasmic portion of the chain corresponds to 521–546; that stretch reads QRFLSATRQGRPQTSLDYTNVLQPHA.

As to quaternary structure, the basic structural unit of both sIgE and mIgE molecules consists of two identical heavy chains and two identical light chains; disulfide-linked. N-terminal variable regions of the heavy and light chains form the antigen binding sites, whereas the C-terminal constant regions of the heavy chains interact with immune receptors to mediate effector functions. Part of IgE antibody. Interacts (via CH3) with the alpha chain/FCE1RA of IgE Fc receptor complex. Interacts (via CH3 region) with FCER2 (via C-type lectin domain); this interaction regulates IgE homeostasis. In terms of assembly, part of IgE B cell antigen receptor complex (BCR). The BCR complex consists of one mIgE molecule responsible for antigen binding, non-covalently associated with CD79A and CD79B signaling chains. As to expression, expressed in B lymphocytes stimulated with IL4 and CD40.

It localises to the secreted. The protein localises to the cell membrane. Its function is as follows. Constant region of immunoglobulin heavy chains. Immunoglobulins, also known as antibodies, are membrane-bound or secreted glycoproteins produced by B lymphocytes. In the recognition phase of humoral immunity, the membrane-bound immunoglobulins serve as receptors which, upon binding of a specific antigen, trigger the clonal expansion and differentiation of B lymphocytes into immunoglobulins-secreting plasma cells. Secreted immunoglobulins mediate the effector phase of humoral immunity, which results in the elimination of bound antigens. The antigen binding site is formed by the variable domain of one heavy chain, together with that of its associated light chain. Thus, each immunoglobulin has two antigen binding sites with remarkable affinity for a particular antigen. The variable domains are assembled by a process called V-(D)-J rearrangement and can then be subjected to somatic hypermutations which, after exposure to antigen and selection, allow affinity maturation for a particular antigen. Functionally, constant region of secreted IgE, also known as the Fc region of IgE antibody. Mediates IgE effector functions on myeloid and lymphoid cells primarily via two Fc receptors, the high-affinity IgE Fc receptor complex/FCER1A:MS4A2:FCGR1A and the low-affinity FCER2 receptor, which upon antigen/allergen cross-linking initiate signaling pathways that lead to immune cell activation and differentiation. Triggers the immediate hypersensitivity response to allergens as a host defense mechanism against helminth parasites, pathogenic bacteria and venom toxicity. When dysregulated, it can elicit harmful life-threatening allergic and anaphylactic reactions. Stimulates the high-affinity IgE Fc receptor complex/FCER1A:MS4A2:FCGR1A on mast cells, basophils and eosinophils leading to secretion of vasoactive amines, lipid mediators and cytokines that contribute to inflammatory response, tissue remodeling and cytotoxicity against microbes. On macrophages, cross-linking of FCER2 by IgE immune complexes induces intracellular killing of parasites through activation of L-Arginine-nitric oxide pathway. Activates macrophages to kill tumor cells via antigen-specific antibody-dependent cytotoxicity (ADCC). Triggers differentiation of quiescent M0 macrophages toward M1 state and reprograms M2 macrophages toward a proinflammatory state with antitumor functions. Stimulates FCER2 on B cells and initiates IgE-dependent antigen uptake and presentation to T cells. In terms of biological role, constant region of membrane-bound IgE (long mIgE), part of the B cell receptor complex (BCR). Upon antigen cross-linking triggers quick BCR signaling, ensuring survival of IgE-switched B cells and differentiation into plasma cells, thus regulating both primary and memory IgE responses. Constant region of membrane-bound IgE (short mIgE), part of the B cell receptor complex (BCR). Upon antigen cross-linking initiates slower but sustained BCR signaling that negatively regulates mature B cell proliferation. This is Immunoglobulin heavy constant epsilon from Homo sapiens (Human).